The following is a 185-amino-acid chain: Guanosine deaminase (185 aa).

The CMP/dCMP-type deaminase domain maps to 28–142; the sequence is DSDHKFLTQA…AAIAIGFDDF (115 aa). Residue His80 coordinates Zn(2+). Glu82 acts as the Proton donor in catalysis. The Zn(2+) site is built by Cys110 and Cys113.

The protein belongs to the cytidine and deoxycytidylate deaminase family. Expressed in roots, leaves, flowers and siliques.

The protein localises to the cytoplasm. It is found in the nucleus. The enzyme catalyses guanosine + H2O + H(+) = xanthosine + NH4(+). Functionally, catalyzes the hydrolytic deamination of guanosine, producing xanthosine and ammonia. Deaminates exclusively guanosine and 2'-deoxyguanosine but no other aminated purines, pyrimidines, or pterines. Deamination of guanosine by GSDA is the only source of xanthosine production in Arabidopsis. This is Guanosine deaminase from Arabidopsis thaliana (Mouse-ear cress).